Reading from the N-terminus, the 118-residue chain is Large ribosomal subunit protein bL20 (118 aa).

This sequence belongs to the bacterial ribosomal protein bL20 family.

In terms of biological role, binds directly to 23S ribosomal RNA and is necessary for the in vitro assembly process of the 50S ribosomal subunit. It is not involved in the protein synthesizing functions of that subunit. This Bacillus cytotoxicus (strain DSM 22905 / CIP 110041 / 391-98 / NVH 391-98) protein is Large ribosomal subunit protein bL20.